The chain runs to 249 residues: tRNA pseudouridine synthase A (249 aa).

The active-site Nucleophile is the D53. Y111 serves as a coordination point for substrate.

It belongs to the tRNA pseudouridine synthase TruA family. Homodimer.

The enzyme catalyses uridine(38/39/40) in tRNA = pseudouridine(38/39/40) in tRNA. In terms of biological role, formation of pseudouridine at positions 38, 39 and 40 in the anticodon stem and loop of transfer RNAs. This is tRNA pseudouridine synthase A from Streptococcus equi subsp. equi (strain 4047).